The following is a 130-amino-acid chain: Small ribosomal subunit protein uS8 (130 aa).

It belongs to the universal ribosomal protein uS8 family. As to quaternary structure, part of the 30S ribosomal subunit. Contacts proteins S5 and S12.

Functionally, one of the primary rRNA binding proteins, it binds directly to 16S rRNA central domain where it helps coordinate assembly of the platform of the 30S subunit. This Pseudoalteromonas translucida (strain TAC 125) protein is Small ribosomal subunit protein uS8.